A 379-amino-acid chain; its full sequence is dTDP-3-amino-3,4,6-trideoxy-alpha-D-glucose transaminase (379 aa).

Residues glycine 67, glutamine 167, 188-193 (SFYPGK), tyrosine 221, tyrosine 227, 235-237 (NSR), and tyrosine 318 contribute to the pyridoxal 5'-phosphate site. Lysine 193 is subject to N6-(pyridoxal phosphate)lysine.

It belongs to the degT/dnrJ/eryC1 family. As to quaternary structure, homodimer. Pyridoxal 5'-phosphate serves as cofactor.

The catalysed reaction is dTDP-3-amino-3,4,6-trideoxy-alpha-D-glucose + 2-oxoglutarate = dTDP-3-dehydro-4,6-dideoxy-alpha-D-glucose + L-glutamate. Its pathway is antibiotic biosynthesis. Its function is as follows. Involved in the biosynthesis of dTDP-alpha-D-desosamine, a sugar found in several bacterial macrolide antibiotics. Catalyzes the reversible transfer of the amino group from L-glutamate to the C-3 position of dTDP-3-keto-4,6-deoxyglucose to yield dTDP-3-amino-3,4,6-trideoxyglucose. This chain is dTDP-3-amino-3,4,6-trideoxy-alpha-D-glucose transaminase, found in Streptomyces venezuelae.